A 203-amino-acid chain; its full sequence is ATP-dependent Clp protease proteolytic subunit 1 (203 aa).

Residue Ser-101 is the Nucleophile of the active site. His-126 is an active-site residue.

It belongs to the peptidase S14 family. In terms of assembly, fourteen ClpP subunits assemble into 2 heptameric rings which stack back to back to give a disk-like structure with a central cavity, resembling the structure of eukaryotic proteasomes.

It localises to the cytoplasm. It catalyses the reaction Hydrolysis of proteins to small peptides in the presence of ATP and magnesium. alpha-casein is the usual test substrate. In the absence of ATP, only oligopeptides shorter than five residues are hydrolyzed (such as succinyl-Leu-Tyr-|-NHMec, and Leu-Tyr-Leu-|-Tyr-Trp, in which cleavage of the -Tyr-|-Leu- and -Tyr-|-Trp bonds also occurs).. Functionally, cleaves peptides in various proteins in a process that requires ATP hydrolysis. Has a chymotrypsin-like activity. Plays a major role in the degradation of misfolded proteins. The chain is ATP-dependent Clp protease proteolytic subunit 1 from Synechococcus sp. (strain JA-2-3B'a(2-13)) (Cyanobacteria bacterium Yellowstone B-Prime).